Here is a 276-residue protein sequence, read N- to C-terminus: Large ribosomal subunit protein uL2 (276 aa).

Residues Arg-221 to Lys-276 are disordered. Over residues Lys-252 to Lys-276 the composition is skewed to basic residues.

The protein belongs to the universal ribosomal protein uL2 family. As to quaternary structure, part of the 50S ribosomal subunit. Forms a bridge to the 30S subunit in the 70S ribosome.

In terms of biological role, one of the primary rRNA binding proteins. Required for association of the 30S and 50S subunits to form the 70S ribosome, for tRNA binding and peptide bond formation. It has been suggested to have peptidyltransferase activity; this is somewhat controversial. Makes several contacts with the 16S rRNA in the 70S ribosome. This is Large ribosomal subunit protein uL2 from Aster yellows witches'-broom phytoplasma (strain AYWB).